The primary structure comprises 230 residues: Triggering receptor expressed on myeloid cells 1 (230 aa).

The first 20 residues, 1–20 (MRKAGLWGLLCVFFVSEVKA), serve as a signal peptide directing secretion. In terms of domain architecture, Ig-like V-type spans 21 to 124 (AIVLEEERYD…IYHPPNDPVV (104 aa)). Residues 21–202 (AIVLEEERYD…TDADSVSTSS (182 aa)) are Extracellular-facing. Cysteine 41 and cysteine 113 are oxidised to a cystine. The N-linked (GlcNAc...) asparagine glycan is linked to asparagine 191. A helical transmembrane segment spans residues 203–223 (VTISVICGLLSKSLVFIILFI). At 224 to 230 (VTKRTFG) the chain is on the cytoplasmic side.

Monomer. Homomultimer; when activated. Interacts with TYROBP/DAP12. Interacts with TLR4.

It is found in the cell membrane. Its function is as follows. Cell surface receptor that plays important roles in innate and adaptive immunity by amplifying inflammatory responses. Upon activation by various ligands such as PGLYRP1, HMGB1 or HSP70, multimerizes and forms a complex with transmembrane adapter TYROBP/DAP12. In turn, initiates a SYK-mediated cascade of tyrosine phosphorylation, activating multiple downstream mediators such as BTK, MAPK1, MAPK3 or phospholipase C-gamma. This cascade promotes the neutrophil- and macrophage-mediated release of pro-inflammatory cytokines and/or chemokines, as well as their migration and thereby amplifies inflammatory responses that are triggered by bacterial and fungal infections. By also promoting the amplification of inflammatory signals that are initially triggered by Toll-like receptor (TLR) and NOD-like receptor engagement, plays a major role in the pathophysiology of acute and chronic inflammatory diseases of different etiologies including septic shock and atherosclerosis. This Mus musculus (Mouse) protein is Triggering receptor expressed on myeloid cells 1 (Trem1).